A 463-amino-acid polypeptide reads, in one-letter code: ATP synthase subunit beta (463 aa).

152-159 (GGAGVGKT) contributes to the ATP binding site.

It belongs to the ATPase alpha/beta chains family. F-type ATPases have 2 components, CF(1) - the catalytic core - and CF(0) - the membrane proton channel. CF(1) has five subunits: alpha(3), beta(3), gamma(1), delta(1), epsilon(1). CF(0) has three main subunits: a(1), b(2) and c(9-12). The alpha and beta chains form an alternating ring which encloses part of the gamma chain. CF(1) is attached to CF(0) by a central stalk formed by the gamma and epsilon chains, while a peripheral stalk is formed by the delta and b chains.

Its subcellular location is the cell inner membrane. It carries out the reaction ATP + H2O + 4 H(+)(in) = ADP + phosphate + 5 H(+)(out). Its function is as follows. Produces ATP from ADP in the presence of a proton gradient across the membrane. The catalytic sites are hosted primarily by the beta subunits. The chain is ATP synthase subunit beta from Shewanella sp. (strain ANA-3).